The primary structure comprises 95 residues: DNA-directed RNA polymerase subunit Rpo11 (95 aa).

This sequence belongs to the archaeal Rpo11/eukaryotic RPB11/RPC19 RNA polymerase subunit family. As to quaternary structure, part of the RNA polymerase complex.

The protein localises to the cytoplasm. It carries out the reaction RNA(n) + a ribonucleoside 5'-triphosphate = RNA(n+1) + diphosphate. Its function is as follows. DNA-dependent RNA polymerase (RNAP) catalyzes the transcription of DNA into RNA using the four ribonucleoside triphosphates as substrates. The sequence is that of DNA-directed RNA polymerase subunit Rpo11 from Pyrococcus abyssi (strain GE5 / Orsay).